Reading from the N-terminus, the 470-residue chain is ATP synthase subunit beta (470 aa).

Position 158-165 (158-165 (GGAGVGKT)) interacts with ATP.

The protein belongs to the ATPase alpha/beta chains family. As to quaternary structure, F-type ATPases have 2 components, CF(1) - the catalytic core - and CF(0) - the membrane proton channel. CF(1) has five subunits: alpha(3), beta(3), gamma(1), delta(1), epsilon(1). CF(0) has three main subunits: a(1), b(2) and c(9-12). The alpha and beta chains form an alternating ring which encloses part of the gamma chain. CF(1) is attached to CF(0) by a central stalk formed by the gamma and epsilon chains, while a peripheral stalk is formed by the delta and b chains.

The protein localises to the cell membrane. It carries out the reaction ATP + H2O + 4 H(+)(in) = ADP + phosphate + 5 H(+)(out). In terms of biological role, produces ATP from ADP in the presence of a proton gradient across the membrane. The catalytic sites are hosted primarily by the beta subunits. The sequence is that of ATP synthase subunit beta from Alkalihalophilus pseudofirmus (strain ATCC BAA-2126 / JCM 17055 / OF4) (Bacillus pseudofirmus).